The sequence spans 455 residues: Probable hexose phosphate transport protein (455 aa).

Transmembrane regions (helical) follow at residues 34 to 54, 70 to 90, 113 to 133, 161 to 181, and 185 to 205; these read IFYS…SFTF, LGII…VSGV, IFFG…LNGW, VWST…GFII, and GWRG…LVLI. Positions 219–242 are disordered; that stretch reads PIEKYKRDPHHAHHEGKSASEGTE. Helical transmembrane passes span 257–277, 302–322, 331–351, 363–383, 394–414, and 424–444; these read YVLT…IYIV, FCVS…GWLS, GPMN…MWFS, LLFV…LAAA, ASGF…YPLG, and GFFI…LPTW.

This sequence belongs to the major facilitator superfamily. Organophosphate:Pi antiporter (OPA) (TC 2.A.1.4) family.

It is found in the cell membrane. Its function is as follows. Transport protein for sugar phosphate uptake. This Chlamydia pneumoniae (Chlamydophila pneumoniae) protein is Probable hexose phosphate transport protein (uhpC).